A 33-amino-acid polypeptide reads, in one-letter code: Photosystem II reaction center protein Psb30 (33 aa).

The chain crosses the membrane as a helical span at residues 5 to 25; the sequence is IVAQLTVLALIVVSGPLVIAL.

The protein belongs to the Psb30/Ycf12 family. In terms of assembly, PSII is composed of 1 copy each of membrane proteins PsbA, PsbB, PsbC, PsbD, PsbE, PsbF, PsbH, PsbI, PsbJ, PsbK, PsbL, PsbM, PsbT, PsbX, PsbY, PsbZ, Psb30/Ycf12, peripheral proteins of the oxygen-evolving complex and a large number of cofactors. It forms dimeric complexes.

The protein localises to the plastid. The protein resides in the chloroplast thylakoid membrane. Its function is as follows. A core subunit of photosystem II (PSII), probably helps stabilize the reaction center. This is Photosystem II reaction center protein Psb30 from Angiopteris evecta (Mule's foot fern).